The following is a 570-amino-acid chain: Formate--tetrahydrofolate ligase (570 aa).

65–72 (TPLGEGKT) provides a ligand contact to ATP.

It belongs to the formate--tetrahydrofolate ligase family.

The enzyme catalyses (6S)-5,6,7,8-tetrahydrofolate + formate + ATP = (6R)-10-formyltetrahydrofolate + ADP + phosphate. The protein operates within one-carbon metabolism; tetrahydrofolate interconversion. This is Formate--tetrahydrofolate ligase from Herpetosiphon aurantiacus (strain ATCC 23779 / DSM 785 / 114-95).